The primary structure comprises 215 residues: Ras-related protein SEC4 (215 aa).

Position 27 to 34 (27 to 34) interacts with GTP; that stretch reads GDSGVGKS. An Effector region motif is present at residues 49–57; it reads FITTIGIDF. GTP-binding positions include 75–79 and 133–136; these read DTAGQ and NKSD. 2 positions are modified to phosphoserine: S201 and S204. 2 S-geranylgeranyl cysteine lipidation sites follow: C214 and C215.

The protein belongs to the small GTPase superfamily. Rab family. In terms of assembly, interacts with the guanyl-nucleotide exchange factor SEC2. Interacts with SRO7, YIF1, YIP3, YIP4 and YIP5.

The protein localises to the cytoplasmic vesicle. It localises to the secretory vesicle membrane. Its subcellular location is the cell membrane. The protein resides in the cytoplasm. Its function is as follows. Involved in exocytosis. Maybe by regulating the binding and fusion of secretory vesicles with the cell surface. The GTP-bound form of SEC4 may interact with an effector, thereby stimulating its activity and leading to exocytotic fusion. SEC4 may be an upstream activator of the 19.5S SEC8/SEC15 particle. SEC4 probably interacts directly with SEC8; it could serve as the attachment site for the SEC8/SEC15 particle. This is Ras-related protein SEC4 (SEC4) from Saccharomyces cerevisiae (strain ATCC 204508 / S288c) (Baker's yeast).